A 240-amino-acid polypeptide reads, in one-letter code: Adenylate dimethylallyltransferase (240 aa).

This sequence belongs to the isopentenyl transferase family.

It catalyses the reaction dimethylallyl diphosphate + AMP = N(6)-(dimethylallyl)adenosine 5'-phosphate + diphosphate. Transfers dimethylallyl groups to AMP as part of the biosynthesis of cytokinin phytohormones. The polypeptide is Adenylate dimethylallyltransferase (izt) (Agrobacterium tumefaciens (strain Ach5)).